We begin with the raw amino-acid sequence, 436 residues long: Serine carboxypeptidase-like 15 (436 aa).

A signal peptide spans 1–24; the sequence is MASWIFKLLLLLQCVLVLIQHADS. 3 disulfides stabilise this stretch: cysteine 83/cysteine 326, cysteine 247/cysteine 261, and cysteine 285/cysteine 292. Asparagine 104 is a glycosylation site (N-linked (GlcNAc...) asparagine). The active site involves serine 179. 2 N-linked (GlcNAc...) asparagine glycosylation sites follow: asparagine 306 and asparagine 345. Aspartate 361 is a catalytic residue. Residue asparagine 377 is glycosylated (N-linked (GlcNAc...) asparagine). Residue histidine 414 is part of the active site.

This sequence belongs to the peptidase S10 family. In terms of tissue distribution, expressed in seedlings and roots.

Its subcellular location is the secreted. Functionally, probable carboxypeptidase. The sequence is that of Serine carboxypeptidase-like 15 (SCPL15) from Arabidopsis thaliana (Mouse-ear cress).